We begin with the raw amino-acid sequence, 202 residues long: ATP-dependent Clp protease proteolytic subunit (202 aa).

Residue serine 107 is the Nucleophile of the active site. The active site involves histidine 132.

The protein belongs to the peptidase S14 family. In terms of assembly, fourteen ClpP subunits assemble into 2 heptameric rings which stack back to back to give a disk-like structure with a central cavity, resembling the structure of eukaryotic proteasomes.

It is found in the cytoplasm. It catalyses the reaction Hydrolysis of proteins to small peptides in the presence of ATP and magnesium. alpha-casein is the usual test substrate. In the absence of ATP, only oligopeptides shorter than five residues are hydrolyzed (such as succinyl-Leu-Tyr-|-NHMec, and Leu-Tyr-Leu-|-Tyr-Trp, in which cleavage of the -Tyr-|-Leu- and -Tyr-|-Trp bonds also occurs).. Its function is as follows. Cleaves peptides in various proteins in a process that requires ATP hydrolysis. Has a chymotrypsin-like activity. Plays a major role in the degradation of misfolded proteins. The chain is ATP-dependent Clp protease proteolytic subunit from Shewanella amazonensis (strain ATCC BAA-1098 / SB2B).